Here is a 680-residue protein sequence, read N- to C-terminus: Tripartite terminase subunit 1 (680 aa).

The segment at 180–208 adopts a C3H1-type zinc-finger fold; that stretch reads CLECVLETSVVPNQGETLNELLLNHNCHH. 610–617 is an ATP binding site; sequence YNITWEKN.

Belongs to the herpesviridae TRM1 protein family. As to quaternary structure, associates with TRM2 and TRM3 to form the tripartite terminase complex. Interacts with portal protein.

It localises to the host nucleus. Functionally, component of the molecular motor that translocates viral genomic DNA in empty capsid during DNA packaging. Forms a tripartite terminase complex together with TRM2 and TRM3 in the host cytoplasm. Once the complex reaches the host nucleus, it interacts with the capsid portal vertex. This portal forms a ring in which genomic DNA is translocated into the capsid. TRM1 carries an endonuclease activity that plays an important role for the cleavage of concatemeric viral DNA into unit length genomes. The sequence is that of Tripartite terminase subunit 1 from Alcelaphine herpesvirus 1 (strain C500) (AlHV-1).